The chain runs to 764 residues: MTTAHILGFPRIGAQRELKFALERYWRDGASADAERALVDTGRALRAEHWRIERDAGLDCVTVGDFAWYDHVLTTLAHVGGLPRRFGFDAHALTLADYFAAARGNAAQPAMEMTKWFDTNYHYLVPEYSPATTFGPGVEWLFDEVREARALGHRAKAALVGPLTLLWLGKARDGLVERLALLPRLVPAYRALLARLREAGVDWVQIDEPIFSLDLPDAWRDAARPTYEALAPGAPKLLVATYFDDASEHAALLKALPVAGLHIDLVRADAQLDAFVADYPADKVLSCGIVDGRNVWRNDLDRSLARLAPVRDALGERLWVATSCSLLHVPVDLAHEPRLDEELKTWLAFAAQKTREVAALRDALVKGRAAVAAEFDDAAAAAAARRTSARIHNPLVKRRVAALTDADARRASTYSVRAAAQRARFGLPLLPTTTIGSFPQTPEIRRARAAFKQGVLDHLGYLEAMREQVRIAIDKQLAYGLDVLVHGEAERNDMVEYFGELLWGFAITSNGWVQSYGSRCVKPPLVYGDVYLPEPMTVGWASYAQSLSAKPVKGMLTGPVTMLQWSFVRDDQPRATTALQIALALRQETLDLEKAGIGMIQIDEPALREGLPLKARERAAYLDWAVRAFGIAASGVADDTQIHTHMCYSEFGDILPSIAALDADVISIETTRSNMELLDAFETFDYPNEIGPGVYDIHSPRVPDADEIERLILLALERIPAQRLWVNPDCGLKTREWRQVDAALAAMVDAAKRVRQKVEEAVPA.

5-methyltetrahydropteroyltri-L-glutamate is bound by residues 16-19 (RELK) and Lys-115. L-homocysteine-binding positions include 435–437 (IGS) and Glu-488. Residues 435–437 (IGS) and Glu-488 each bind L-methionine. 5-methyltetrahydropteroyltri-L-glutamate-binding positions include 519-520 (RC) and Trp-565. Asp-603 provides a ligand contact to L-homocysteine. Residue Asp-603 coordinates L-methionine. Glu-609 lines the 5-methyltetrahydropteroyltri-L-glutamate pocket. Residues His-645, Cys-647, and Glu-669 each contribute to the Zn(2+) site. The Proton donor role is filled by His-698. Cys-730 provides a ligand contact to Zn(2+).

Belongs to the vitamin-B12 independent methionine synthase family. It depends on Zn(2+) as a cofactor.

The enzyme catalyses 5-methyltetrahydropteroyltri-L-glutamate + L-homocysteine = tetrahydropteroyltri-L-glutamate + L-methionine. Its pathway is amino-acid biosynthesis; L-methionine biosynthesis via de novo pathway; L-methionine from L-homocysteine (MetE route): step 1/1. Its function is as follows. Catalyzes the transfer of a methyl group from 5-methyltetrahydrofolate to homocysteine resulting in methionine formation. This is 5-methyltetrahydropteroyltriglutamate--homocysteine methyltransferase from Burkholderia pseudomallei (strain 668).